A 267-amino-acid polypeptide reads, in one-letter code: MWWFQQGLSFLPSALVIWTFATFIFSYITAITLHHVDPALPYISDTGTIPPERCLFGVMLNIAAVLGIATMYVRYKQVHALNPEENLIIKLNKAGLVLGILSCLGLSLVANFQKSTLFIVHVCGAVLAFSMGSFYMFVQTILSYQMQPKIHSKQVFWVRLLLVIWCGVSALSMMTCSSILYSSDFGPDVVQKLHWNPEDKGYVLHLVTTAAEWSMSFSFFGFFLTYIRDFQKITLRVEANLHGLTLYDTVPCPVNNERTPLLSRDFQ.

6 helical membrane passes run 8-28, 53-73, 87-107, 118-138, 160-180, and 203-223; these read LSFL…FSYI, RCLF…TMYV, LIIK…LGLS, FIVH…YMFV, LLLV…SSIL, and VLHL…FGFF.

Belongs to the DRAM/TMEM150 family. In terms of tissue distribution, expressed in the retina.

The protein resides in the lysosome membrane. It localises to the photoreceptor inner segment. The protein localises to the apical cell membrane. In terms of biological role, plays a role in the initiation of autophagy. In the retina, might be involved in the process of photoreceptor cells renewal and recycling to preserve visual function. Induces apoptotic cell death when coexpressed with DRAM1. In Mus musculus (Mouse), this protein is DNA damage-regulated autophagy modulator protein 2 (Dram2).